Consider the following 677-residue polypeptide: Mitochondrial disaggregase (677 aa).

The N-terminal 28 residues, 1–28 (MLGSLVSKRTAPAPRLLLQLLRSPSLRS), are a transit peptide targeting the mitochondrion. The tract at residues 92–126 (PSPEDTLPGQDSWNGVLSRAGLGVWALATALVVHC) is autoinhibitory. 4 ANK repeats span residues 133-162 (SKDA…DVNA), 166-195 (LGWT…DPNL), 235-265 (KGCT…PLQR), and 268-297 (MGHT…EKQR). ATP is bound by residues His-316, Ile-318, Ser-353, Gly-354, Ile-355, Gly-356, Lys-357, Thr-358, Glu-425, and Asn-466. Residues 477 to 505 (LQLRQEALEMSRNRIAENLGDVQISDKIT) are regulatory; slows ATPase and disaggregase activities. An ATP-binding site is contributed by Arg-531. Lys-559 is subject to N6-acetyllysine. Arg-590 contacts ATP.

This sequence belongs to the ClpA/ClpB family. As to quaternary structure, homododecamer when substrate-bound; the homododecamer consists of 2 homohexamers stacked head-to-head via ANK repeat-mediated interactions. The active substrate-bound form is likely to exist in a dynamic equilibrium between homohexamers and homododecamers. Homotetradecamer in the unbound state which is remodeled upon substrate binding into the homododecamer. Interacts with PHB and PHB2. Interacts with MAVS; the interaction is enhanced by Sendai virus infection. Post-translationally, proteolytically cleaved by protease PARL. ATP-dependent protein disaggregase activity is stimulated by PARL-mediated cleavage of the N-terminal autoinhibitory peptide.

The protein resides in the mitochondrion intermembrane space. The enzyme catalyses ATP + H2O = ADP + phosphate + H(+). Disaggregase activity is inhibited by ADP. Its function is as follows. Functions as a regulatory ATPase and participates in secretion/protein trafficking process. Has ATP-dependent protein disaggregase activity and is required to maintain the solubility of key mitochondrial proteins. Involved in mitochondrial-mediated antiviral innate immunity, activates RIG-I-mediated signal transduction and production of IFNB1 and pro-inflammatory cytokine IL6. Plays a role in granulocyte differentiation. The sequence is that of Mitochondrial disaggregase from Bos taurus (Bovine).